The chain runs to 541 residues: uncharacterized protein (541 aa).

The protein resides in the virion. This is an uncharacterized protein from Acanthamoeba polyphaga mimivirus (APMV).